Consider the following 458-residue polypeptide: Phosphoglucosamine mutase (458 aa).

Catalysis depends on S108, which acts as the Phosphoserine intermediate. Mg(2+)-binding residues include S108, D247, D249, and D251. At S108 the chain carries Phosphoserine.

This sequence belongs to the phosphohexose mutase family. It depends on Mg(2+) as a cofactor. Post-translationally, activated by phosphorylation.

The enzyme catalyses alpha-D-glucosamine 1-phosphate = D-glucosamine 6-phosphate. In terms of biological role, catalyzes the conversion of glucosamine-6-phosphate to glucosamine-1-phosphate. The polypeptide is Phosphoglucosamine mutase (Thiobacillus denitrificans (strain ATCC 25259 / T1)).